Consider the following 317-residue polypeptide: 4-hydroxy-3-methylbut-2-enyl diphosphate reductase (317 aa).

A [4Fe-4S] cluster-binding site is contributed by cysteine 12. Positions 41 and 74 each coordinate (2E)-4-hydroxy-3-methylbut-2-enyl diphosphate. The dimethylallyl diphosphate site is built by histidine 41 and histidine 74. 2 residues coordinate isopentenyl diphosphate: histidine 41 and histidine 74. [4Fe-4S] cluster is bound at residue cysteine 96. Position 124 (histidine 124) interacts with (2E)-4-hydroxy-3-methylbut-2-enyl diphosphate. Histidine 124 lines the dimethylallyl diphosphate pocket. Histidine 124 contributes to the isopentenyl diphosphate binding site. Glutamate 126 acts as the Proton donor in catalysis. Residue threonine 168 participates in (2E)-4-hydroxy-3-methylbut-2-enyl diphosphate binding. Cysteine 198 contributes to the [4Fe-4S] cluster binding site. 4 residues coordinate (2E)-4-hydroxy-3-methylbut-2-enyl diphosphate: serine 226, serine 227, asparagine 228, and serine 270. Residues serine 226, serine 227, asparagine 228, and serine 270 each contribute to the dimethylallyl diphosphate site. Isopentenyl diphosphate is bound by residues serine 226, serine 227, asparagine 228, and serine 270.

The protein belongs to the IspH family. [4Fe-4S] cluster is required as a cofactor.

It catalyses the reaction isopentenyl diphosphate + 2 oxidized [2Fe-2S]-[ferredoxin] + H2O = (2E)-4-hydroxy-3-methylbut-2-enyl diphosphate + 2 reduced [2Fe-2S]-[ferredoxin] + 2 H(+). It carries out the reaction dimethylallyl diphosphate + 2 oxidized [2Fe-2S]-[ferredoxin] + H2O = (2E)-4-hydroxy-3-methylbut-2-enyl diphosphate + 2 reduced [2Fe-2S]-[ferredoxin] + 2 H(+). It participates in isoprenoid biosynthesis; dimethylallyl diphosphate biosynthesis; dimethylallyl diphosphate from (2E)-4-hydroxy-3-methylbutenyl diphosphate: step 1/1. Its pathway is isoprenoid biosynthesis; isopentenyl diphosphate biosynthesis via DXP pathway; isopentenyl diphosphate from 1-deoxy-D-xylulose 5-phosphate: step 6/6. In terms of biological role, catalyzes the conversion of 1-hydroxy-2-methyl-2-(E)-butenyl 4-diphosphate (HMBPP) into a mixture of isopentenyl diphosphate (IPP) and dimethylallyl diphosphate (DMAPP). Acts in the terminal step of the DOXP/MEP pathway for isoprenoid precursor biosynthesis. This is 4-hydroxy-3-methylbut-2-enyl diphosphate reductase from Chromohalobacter salexigens (strain ATCC BAA-138 / DSM 3043 / CIP 106854 / NCIMB 13768 / 1H11).